The following is a 307-amino-acid chain: Elongation factor Ts (307 aa).

Residues 79–82 form an involved in Mg(2+) ion dislocation from EF-Tu region; the sequence is TDFV.

Belongs to the EF-Ts family.

It localises to the cytoplasm. Associates with the EF-Tu.GDP complex and induces the exchange of GDP to GTP. It remains bound to the aminoacyl-tRNA.EF-Tu.GTP complex up to the GTP hydrolysis stage on the ribosome. This is Elongation factor Ts from Bartonella tribocorum (strain CIP 105476 / IBS 506).